The chain runs to 147 residues: Hemoglobin subunit gamma-1 (147 aa).

Gly2 is modified (N-acetylglycine; in form Hb F1). The Globin domain maps to 3-147 (HFTEEDKATI…VASALSSRYH (145 aa)). A Phosphothreonine modification is found at Thr13. Ser45, Ser51, and Ser53 each carry phosphoserine. Lys60 is subject to N6-acetyllysine. His64 lines the heme b pocket. Lys83 carries the N6-acetyllysine modification. His93 provides a ligand contact to heme b. An S-nitrosocysteine modification is found at Cys94. Phosphoserine is present on Ser140.

It belongs to the globin family. In terms of assembly, heterotetramer of two alpha chains and two gamma chains in fetal hemoglobin (Hb F). In the case of deletions affecting one or more of the alpha chains, the excess gamma chains form homotetramers that exhibit neither Bohr effect nor heme-heme cooperativity (hemoglobin Bart's). Post-translationally, acetylation of Gly-2 converts Hb F to the minor Hb F1. Red blood cells.

Functionally, gamma chains make up the fetal hemoglobin F, in combination with alpha chains. In Homo sapiens (Human), this protein is Hemoglobin subunit gamma-1 (HBG1).